A 107-amino-acid chain; its full sequence is Integration host factor subunit alpha (107 aa).

This sequence belongs to the bacterial histone-like protein family. As to quaternary structure, heterodimer of an alpha and a beta chain.

This protein is one of the two subunits of integration host factor, a specific DNA-binding protein that functions in genetic recombination as well as in transcriptional and translational control. In Brucella anthropi (strain ATCC 49188 / DSM 6882 / CCUG 24695 / JCM 21032 / LMG 3331 / NBRC 15819 / NCTC 12168 / Alc 37) (Ochrobactrum anthropi), this protein is Integration host factor subunit alpha.